The sequence spans 146 residues: Probable glycine cleavage system H protein 3 (146 aa).

Residues 29–111 form the Lipoyl-binding domain; that stretch reads VVSVGMTDLG…PYGSWIIKVS (83 aa). Lysine 71 is modified (N6-lipoyllysine).

The protein belongs to the GcvH family. In terms of assembly, the glycine cleavage system is composed of four proteins: P, T, L and H. Requires (R)-lipoate as cofactor.

Functionally, the glycine cleavage system catalyzes the degradation of glycine. The H protein shuttles the methylamine group of glycine from the P protein to the T protein. The chain is Probable glycine cleavage system H protein 3 from Sulfolobus acidocaldarius (strain ATCC 33909 / DSM 639 / JCM 8929 / NBRC 15157 / NCIMB 11770).